Consider the following 158-residue polypeptide: Probable host range protein 2-1 (158 aa).

The protein belongs to the poxviridae C7 protein family.

Its function is as follows. Plays a role for multiplication of the virus in different cell types. This Oryctolagus cuniculus (Rabbit) protein is Probable host range protein 2-1.